We begin with the raw amino-acid sequence, 136 residues long: Large ribosomal subunit protein uL16 (136 aa).

The protein belongs to the universal ribosomal protein uL16 family. As to quaternary structure, part of the 50S ribosomal subunit.

Functionally, binds 23S rRNA and is also seen to make contacts with the A and possibly P site tRNAs. The polypeptide is Large ribosomal subunit protein uL16 (Orientia tsutsugamushi (strain Boryong) (Rickettsia tsutsugamushi)).